The chain runs to 562 residues: Tissue-type plasminogen activator (562 aa).

Residues 1–22 (MDAMKRGLCCVLLLCGAVFVSP) form the signal peptide. The propeptide occupies 23–32 (SQEIHARFRR). The propeptide at 33–35 (GAR) is removed by plasmin. A Fibronectin type-I domain is found at 39-81 (VICRDEKTQMIYQQHQSWLRPVLRSNRVEYCWCNSGRAQCHSV). Cystine bridges form between cysteine 41–cysteine 71, cysteine 69–cysteine 78, cysteine 86–cysteine 97, cysteine 91–cysteine 108, cysteine 110–cysteine 119, cysteine 127–cysteine 208, cysteine 148–cysteine 190, cysteine 179–cysteine 203, cysteine 215–cysteine 296, cysteine 236–cysteine 278, cysteine 267–cysteine 291, cysteine 299–cysteine 430, cysteine 342–cysteine 358, cysteine 350–cysteine 419, cysteine 444–cysteine 519, cysteine 476–cysteine 492, and cysteine 509–cysteine 537. The interval 42 to 52 (RDEKTQMIYQQ) is important for binding to annexin A2. Positions 82–120 (PVKSCSEPRCFNGGTCQQALYFSDFVCQCPEGFAGKCCE) constitute an EGF-like domain. An O-linked (Fuc) threonine glycan is attached at threonine 96. Kringle domains are found at residues 127 to 208 (CYED…TPAC) and 215 to 296 (CYFG…VPSC). An N-linked (GlcNAc...) asparagine glycan is attached at asparagine 152. The N-linked (GlcNAc...) asparagine; partial glycan is linked to asparagine 219. The Peptidase S1 domain maps to 311-561 (IKGGLFADIA…YLDWIRDNMR (251 aa)). Catalysis depends on charge relay system residues histidine 357 and aspartate 406. The N-linked (GlcNAc...) asparagine glycan is linked to asparagine 483. The Charge relay system role is filled by serine 513.

It belongs to the peptidase S1 family. Heterodimer of chain A and chain B held by a disulfide bond. Forms a heterodimer with SERPINA5. Binds to fibrin with high affinity. This interaction leads to an increase in the catalytic efficiency of the enzyme between 100-fold and 1000-fold, due to an increase in affinity for plasminogen. Similarly, binding to heparin increases the activation of plasminogen. Binds to annexin A2, cytokeratin-8, fibronectin and laminin. Binds to mannose receptor and the low-density lipoprotein receptor-related protein (LRP1); these proteins are involved in TPA clearance. Yet unidentified interactions on endothelial cells and vascular smooth muscle cells (VSMC) lead to a 100-fold stimulation of plasminogen activation. In addition, binding to VSMC reduces TPA inhibition by PAI-1 by 30-fold. Binds LRP1B; binding is followed by internalization and degradation. Interacts with SERPINE1. In complex with SERPINE1, interacts with SORL1. Interacts with apyrase from Anopheles gambiae saliva; the interaction results in PLAT activation probably via an allosteric activation mechanism. In terms of processing, the single chain, almost fully active enzyme, can be further processed into a two-chain fully active form by a cleavage after Arg-310 catalyzed by plasmin, tissue kallikrein or factor Xa. Differential cell-specific N-linked glycosylation gives rise to two glycoforms, type I (glycosylated at Asn-219) and type II (not glycosylated at Asn-219). The single chain type I glycoform is less readily converted into the two-chain form by plasmin, and the two-chain type I glycoform has a lower activity than the two-chain type II glycoform in the presence of fibrin. Post-translationally, N-glycosylation of Asn-152; the bound oligomannosidic glycan is involved in the interaction with the mannose receptor. In terms of processing, characterization of O-linked glycan was studied in Bowes melanoma cell line. Synthesized in numerous tissues (including tumors) and secreted into most extracellular body fluids, such as plasma, uterine fluid, saliva, gingival crevicular fluid, tears, seminal fluid, and milk.

The protein resides in the secreted. It localises to the extracellular space. It catalyses the reaction Specific cleavage of Arg-|-Val bond in plasminogen to form plasmin.. Its activity is regulated as follows. Inhibited by SERPINA5. Inhibited by SERPINE1. Its function is as follows. Converts the abundant, but inactive, zymogen plasminogen to plasmin by hydrolyzing a single Arg-Val bond in plasminogen. By controlling plasmin-mediated proteolysis, it plays an important role in tissue remodeling and degradation, in cell migration and many other physiopathological events. During oocyte activation, plays a role in cortical granule reaction in the zona reaction, which contributes to the block to polyspermy. The protein is Tissue-type plasminogen activator of Homo sapiens (Human).